Consider the following 179-residue polypeptide: Apoptosis regulator Bcl-2 homolog (179 aa).

The BH1 signature appears at E76–A95. Residues P126–S141 carry the BH2 motif.

This sequence belongs to the Bcl-2 family. Interacts with host BECN1 (via BH3 homology domain); this interaction allows the virus to inhibit BECN1, and thus autophagy. Interacts with host BID. Interacts with host BAX.

It is found in the host mitochondrion. The protein localises to the host endoplasmic reticulum. Functionally, suppresses apoptosis in host cell to promote the viral replication. Has the ability to potentially bind to all the members of the proapoptotic Bcl-2 family. Inhibits autophagy by interacting with host Beclin 1 (BECN1). This African swine fever virus (isolate Tick/South Africa/Pretoriuskop Pr4/1996) (ASFV) protein is Apoptosis regulator Bcl-2 homolog.